Here is a 314-residue protein sequence, read N- to C-terminus: Ribosomal protein L11 methyltransferase (314 aa).

S-adenosyl-L-methionine-binding residues include Thr-161, Gly-182, Asp-204, and Asn-248.

This sequence belongs to the methyltransferase superfamily. PrmA family.

It localises to the cytoplasm. It catalyses the reaction L-lysyl-[protein] + 3 S-adenosyl-L-methionine = N(6),N(6),N(6)-trimethyl-L-lysyl-[protein] + 3 S-adenosyl-L-homocysteine + 3 H(+). Its function is as follows. Methylates ribosomal protein L11. The sequence is that of Ribosomal protein L11 methyltransferase from Listeria innocua serovar 6a (strain ATCC BAA-680 / CLIP 11262).